We begin with the raw amino-acid sequence, 187 residues long: Protein GrpE (187 aa).

A disordered region spans residues 1–26 (MHDPKESLETNIQETESQEKLPETPI).

This sequence belongs to the GrpE family. Homodimer.

The protein localises to the cytoplasm. Functionally, participates actively in the response to hyperosmotic and heat shock by preventing the aggregation of stress-denatured proteins, in association with DnaK and GrpE. It is the nucleotide exchange factor for DnaK and may function as a thermosensor. Unfolded proteins bind initially to DnaJ; upon interaction with the DnaJ-bound protein, DnaK hydrolyzes its bound ATP, resulting in the formation of a stable complex. GrpE releases ADP from DnaK; ATP binding to DnaK triggers the release of the substrate protein, thus completing the reaction cycle. Several rounds of ATP-dependent interactions between DnaJ, DnaK and GrpE are required for fully efficient folding. The chain is Protein GrpE from Dichelobacter nodosus (strain VCS1703A).